Consider the following 150-residue polypeptide: UPF0178 protein Bpet3884 (150 aa).

This sequence belongs to the UPF0178 family.

This Bordetella petrii (strain ATCC BAA-461 / DSM 12804 / CCUG 43448) protein is UPF0178 protein Bpet3884.